The primary structure comprises 329 residues: Indolepyruvate C-methyltransferase (329 aa).

This sequence belongs to the methyltransferase superfamily.

It catalyses the reaction indole-3-pyruvate + S-adenosyl-L-methionine = (R)-3-(indol-3-yl)-2-oxobutanoate + S-adenosyl-L-homocysteine + H(+). Its activity is regulated as follows. Strongly inhibited by the thiol reagents p-chloromercuribenzoate and N-ethylmaleimide. Partially inhibited by o-phenanthroline and 2,2'-dipyridyl. Competitively inhibited by L-tryptophan and indolmycin. Functionally, involved in the biosynthesis of the antibiotic indolmycin, an inhibitor of the bacterial tryptophan-tRNA synthetases. Catalyzes the transfer of a methyl group from S-adenosyl-L-methionine to position 3 of the aliphatic side chain of (indol-3-yl)pyruvate to yield 3-methylindolepyruvate. This is Indolepyruvate C-methyltransferase from Streptomyces griseus.